We begin with the raw amino-acid sequence, 212 residues long: Glycerol-3-phosphate acyltransferase (212 aa).

6 helical membrane passes run 6 to 26 (IAVL…GLIL), 56 to 76 (LAAL…LLAH), 92 to 112 (LTLI…WLGF), 122 to 142 (LGVS…AWLL), 150 to 170 (SSVG…FMPA), and 171 to 191 (SHEI…LLLW).

The protein belongs to the PlsY family. Probably interacts with PlsX.

Its subcellular location is the cell inner membrane. The enzyme catalyses an acyl phosphate + sn-glycerol 3-phosphate = a 1-acyl-sn-glycero-3-phosphate + phosphate. It functions in the pathway lipid metabolism; phospholipid metabolism. Functionally, catalyzes the transfer of an acyl group from acyl-phosphate (acyl-PO(4)) to glycerol-3-phosphate (G3P) to form lysophosphatidic acid (LPA). This enzyme utilizes acyl-phosphate as fatty acyl donor, but not acyl-CoA or acyl-ACP. This Zymomonas mobilis subsp. mobilis (strain ATCC 31821 / ZM4 / CP4) protein is Glycerol-3-phosphate acyltransferase.